Here is a 434-residue protein sequence, read N- to C-terminus: Glutamate-1-semialdehyde 2,1-aminomutase (434 aa).

An N6-(pyridoxal phosphate)lysine modification is found at K266.

The protein belongs to the class-III pyridoxal-phosphate-dependent aminotransferase family. HemL subfamily. In terms of assembly, homodimer. It depends on pyridoxal 5'-phosphate as a cofactor.

It is found in the cytoplasm. The enzyme catalyses (S)-4-amino-5-oxopentanoate = 5-aminolevulinate. It participates in porphyrin-containing compound metabolism; protoporphyrin-IX biosynthesis; 5-aminolevulinate from L-glutamyl-tRNA(Glu): step 2/2. The sequence is that of Glutamate-1-semialdehyde 2,1-aminomutase from Psychrobacter sp. (strain PRwf-1).